A 243-amino-acid polypeptide reads, in one-letter code: MSSIYLGVNIDHVATLRNARGTKYPDPVHAAEVAERAGADGITIHLREDRRHITDRDVRILRETLQTRMNLEMAVTDEMIEIALKTQPEYVCLVPEKREELTTEGGLDVAGHLDKIKAATEKLTAAGIKVSLFIDADREQIDAAKACGAPFIELHTGHYADAATEADQLDELKKIAAGASYAADLGITVNAGHGLTYHNVAPIAALPEIYELNIGHAIIGRAVFDGLHKAVADMKAIMVAARQ.

3-amino-2-oxopropyl phosphate is bound at residue N9. 11–12 (DH) serves as a coordination point for 1-deoxy-D-xylulose 5-phosphate. R20 provides a ligand contact to 3-amino-2-oxopropyl phosphate. H45 acts as the Proton acceptor in catalysis. Residues R47 and H52 each contribute to the 1-deoxy-D-xylulose 5-phosphate site. E72 functions as the Proton acceptor in the catalytic mechanism. A 1-deoxy-D-xylulose 5-phosphate-binding site is contributed by T102. Residue H193 is the Proton donor of the active site. 3-amino-2-oxopropyl phosphate is bound by residues G194 and 215–216 (GH).

Belongs to the PNP synthase family. Homooctamer; tetramer of dimers.

The protein resides in the cytoplasm. The enzyme catalyses 3-amino-2-oxopropyl phosphate + 1-deoxy-D-xylulose 5-phosphate = pyridoxine 5'-phosphate + phosphate + 2 H2O + H(+). The protein operates within cofactor biosynthesis; pyridoxine 5'-phosphate biosynthesis; pyridoxine 5'-phosphate from D-erythrose 4-phosphate: step 5/5. Catalyzes the complicated ring closure reaction between the two acyclic compounds 1-deoxy-D-xylulose-5-phosphate (DXP) and 3-amino-2-oxopropyl phosphate (1-amino-acetone-3-phosphate or AAP) to form pyridoxine 5'-phosphate (PNP) and inorganic phosphate. The sequence is that of Pyridoxine 5'-phosphate synthase from Vibrio vulnificus (strain CMCP6).